The primary structure comprises 364 residues: Lysophosphatidic acid receptor 1 (364 aa).

At 1 to 50 the chain is on the extracellular side; the sequence is MAAAFTSSPVVSQPQFTAMNEQQCFSNESIAFFYNRSGKYLATEWNTVTK. 2 disulfides stabilise this stretch: cysteine 24-cysteine 190 and cysteine 188-cysteine 195. N-linked (GlcNAc...) asparagine glycans are attached at residues asparagine 27 and asparagine 35. Lysine 39 is a binding site for a 1-acyl-sn-glycero-3-phosphate. A helical membrane pass occupies residues 51-75; sequence LVMGLGITVCIFIMLANLLVMVAIY. At 76–83 the chain is on the cytoplasmic side; it reads VNRRFHFP. The chain crosses the membrane as a helical span at residues 84–107; it reads IYYLMANLAAADFFAGLAYFYLMF. The Extracellular portion of the chain corresponds to 108–121; sequence NTGPNTRRLTVSTW. A helical transmembrane segment spans residues 122-144; that stretch reads LLRQGLIDTSLTVSVANLLAIAI. 124–129 lines the a 1-acyl-sn-glycero-3-phosphate pocket; sequence RQGLID. The Cytoplasmic segment spans residues 145 to 163; it reads ERHITVFRMQLHARMSNRR. A helical membrane pass occupies residues 164 to 184; it reads VVVVIVVIWTMAIVMGAIPSV. The Extracellular segment spans residues 185 to 204; sequence GWNCICDIENCSNMAPLYSD. A helical membrane pass occupies residues 205 to 225; sequence SYLVFWAIFNLVTFVVMVVLY. Residue tryptophan 210 participates in a 1-acyl-sn-glycero-3-phosphate binding. The Cytoplasmic portion of the chain corresponds to 226-255; it reads AHIFGYVRQRTMRMSRHSSGPRRNRDTMMS. A helical transmembrane segment spans residues 256-280; the sequence is LLKTVVIVLGAFIICWTPGLVLLLL. Residues 281 to 294 are Extracellular-facing; that stretch reads DVCCPQCDVLAYEK. A disulfide bridge connects residues cysteine 284 and cysteine 287. A helical transmembrane segment spans residues 295–315; sequence FFLLLAEFNSAMNPIIYSYRD. The Cytoplasmic segment spans residues 316–364; sequence KEMSATFRQILCCQRSENTSGPTEGSDRSASSLNHTILAGVHSNDHSVV. A Phosphoserine modification is found at serine 341. Threonine 351 is subject to Phosphothreonine.

This sequence belongs to the G-protein coupled receptor 1 family. As to quaternary structure, interacts with RALA and GRK2. Interacts with GNAQ and GNA13. Interacts with CD14; the interaction is enhanced by exposure to bacterial lipopolysaccharide (LPS). N-glycosylated.

Its subcellular location is the cell surface. The protein localises to the cell membrane. It is found in the endosome. In terms of biological role, receptor for lysophosphatidic acid (LPA). Plays a role in the reorganization of the actin cytoskeleton, cell migration, differentiation and proliferation, and thereby contributes to the responses to tissue damage and infectious agents. Activates downstream signaling cascades via the G(i)/G(o), G(12)/G(13), and G(q) families of heteromeric G proteins. Signaling inhibits adenylyl cyclase activity and decreases cellular cAMP levels. Signaling triggers an increase of cytoplasmic Ca(2+) levels. Activates RALA; this leads to the activation of phospholipase C (PLC) and the formation of inositol 1,4,5-trisphosphate. Signaling mediates activation of down-stream MAP kinases. Contributes to the regulation of cell shape. Promotes Rho-dependent reorganization of the actin cytoskeleton in neuronal cells and neurite retraction. Promotes the activation of Rho and the formation of actin stress fibers. Promotes formation of lamellipodia at the leading edge of migrating cells via activation of RAC1. Through its function as LPA receptor, plays a role in chemotaxis and cell migration, including responses to injury and wounding. Plays a role in triggering inflammation in response to bacterial lipopolysaccharide (LPS) via its interaction with CD14. Promotes cell proliferation in response to LPA. Inhibits the intracellular ciliogenesis pathway in response to LPA and through AKT1 activation. Required for normal skeleton development. May play a role in osteoblast differentiation. Required for normal brain development. Required for normal proliferation, survival and maturation of newly formed neurons in the adult dentate gyrus. Plays a role in pain perception and in the initiation of neuropathic pain. This chain is Lysophosphatidic acid receptor 1 (LPAR1), found in Bos taurus (Bovine).